The following is a 151-amino-acid chain: Protein NrdI (151 aa).

This sequence belongs to the NrdI family.

Its function is as follows. Probably involved in ribonucleotide reductase function. In Mesoplasma florum (strain ATCC 33453 / NBRC 100688 / NCTC 11704 / L1) (Acholeplasma florum), this protein is Protein NrdI.